The sequence spans 741 residues: Transcription activator of gluconeogenesis BDBG_05438 (741 aa).

The disordered stretch occupies residues M1–R70. A compositionally biased stretch (polar residues) spans K25–N61. A DNA-binding region (zn(2)-C6 fungal-type) is located at residues C77 to C105. 6 disordered regions span residues Q135–S163, S202–G239, G285–S321, T401–K421, G559–G590, and F655–G741. Positions S202–L226 are enriched in polar residues. Positions S227–S238 are enriched in low complexity. Composition is skewed to polar residues over residues P291–S321 and T401–S416. Low complexity predominate over residues S560–S572. The span at T573–D586 shows a compositional bias: polar residues. The segment covering T672–S718 has biased composition (low complexity). Residues R723–G732 are compositionally biased toward basic residues.

The protein belongs to the ERT1/acuK family.

Its subcellular location is the nucleus. Functionally, transcription factor which regulates nonfermentable carbon utilization. Activator of gluconeogenetic genes. In Blastomyces gilchristii (strain SLH14081) (Blastomyces dermatitidis), this protein is Transcription activator of gluconeogenesis BDBG_05438.